Reading from the N-terminus, the 471-residue chain is UDP-N-acetylmuramate--L-alanine ligase (471 aa).

G112–T118 provides a ligand contact to ATP.

The protein belongs to the MurCDEF family.

It localises to the cytoplasm. It carries out the reaction UDP-N-acetyl-alpha-D-muramate + L-alanine + ATP = UDP-N-acetyl-alpha-D-muramoyl-L-alanine + ADP + phosphate + H(+). It functions in the pathway cell wall biogenesis; peptidoglycan biosynthesis. Cell wall formation. This Aromatoleum aromaticum (strain DSM 19018 / LMG 30748 / EbN1) (Azoarcus sp. (strain EbN1)) protein is UDP-N-acetylmuramate--L-alanine ligase.